Reading from the N-terminus, the 86-residue chain is ATP synthase subunit c (86 aa).

A run of 2 helical transmembrane segments spans residues 13–33 (FFATGLAYLGAGISILAAGLA) and 63–83 (ILGQAMVETSGIYALIIAFIL).

Belongs to the ATPase C chain family. In terms of assembly, F-type ATPases have 2 components, F(1) - the catalytic core - and F(0) - the membrane proton channel. F(1) has five subunits: alpha(3), beta(3), gamma(1), delta(1), epsilon(1). F(0) has three main subunits: a(1), b(2) and c(10-14). The alpha and beta chains form an alternating ring which encloses part of the gamma chain. F(1) is attached to F(0) by a central stalk formed by the gamma and epsilon chains, while a peripheral stalk is formed by the delta and b chains.

The protein resides in the cell membrane. Functionally, f(1)F(0) ATP synthase produces ATP from ADP in the presence of a proton or sodium gradient. F-type ATPases consist of two structural domains, F(1) containing the extramembraneous catalytic core and F(0) containing the membrane proton channel, linked together by a central stalk and a peripheral stalk. During catalysis, ATP synthesis in the catalytic domain of F(1) is coupled via a rotary mechanism of the central stalk subunits to proton translocation. Key component of the F(0) channel; it plays a direct role in translocation across the membrane. A homomeric c-ring of between 10-14 subunits forms the central stalk rotor element with the F(1) delta and epsilon subunits. The chain is ATP synthase subunit c from Acholeplasma laidlawii (strain PG-8A).